Reading from the N-terminus, the 126-residue chain is Acidic phospholipase A2 S1E6-b (126 aa).

Residues 1-3 (VEG) form the signal peptide. Intrachain disulfides connect Cys-29–Cys-119, Cys-31–Cys-47, Cys-46–Cys-98, Cys-52–Cys-126, Cys-53–Cys-91, Cys-60–Cys-84, and Cys-78–Cys-89. Residues Tyr-30, Gly-32, and Gly-34 each contribute to the Ca(2+) site. His-50 is an active-site residue. Ca(2+) is bound at residue Asp-51. Residue Asp-92 is part of the active site.

In terms of assembly, homodimer. Ca(2+) is required as a cofactor. In terms of tissue distribution, expressed by the venom gland.

The protein resides in the secreted. The enzyme catalyses a 1,2-diacyl-sn-glycero-3-phosphocholine + H2O = a 1-acyl-sn-glycero-3-phosphocholine + a fatty acid + H(+). Its function is as follows. Snake venom phospholipase that inhibits ADP-induced platelet aggregation. PLA2 catalyzes the calcium-dependent hydrolysis of the 2-acyl groups in 3-sn-phosphoglycerides. The sequence is that of Acidic phospholipase A2 S1E6-b from Calloselasma rhodostoma (Malayan pit viper).